We begin with the raw amino-acid sequence, 85 residues long: Large ribosomal subunit protein bL27 (85 aa).

Residues 1–22 (MAHKKAGGSTNNGRDSESKRLG) are disordered.

The protein belongs to the bacterial ribosomal protein bL27 family.

In Psychromonas ingrahamii (strain DSM 17664 / CCUG 51855 / 37), this protein is Large ribosomal subunit protein bL27.